A 150-amino-acid chain; its full sequence is Transcriptional repressor NrdR (150 aa).

A zinc finger spans residues 3 to 34 (CPFCAFADSKVVDSRPDKGGSTIRRRRECESC). The region spanning 49-139 (PLVIKKDGRR…VYRSFKDITE (91 aa)) is the ATP-cone domain.

Belongs to the NrdR family. The cofactor is Zn(2+).

Its function is as follows. Negatively regulates transcription of bacterial ribonucleotide reductase nrd genes and operons by binding to NrdR-boxes. The polypeptide is Transcriptional repressor NrdR (Geotalea uraniireducens (strain Rf4) (Geobacter uraniireducens)).